The sequence spans 579 residues: Probable cholinesterase (579 aa).

Positions 1–19 are cleaved as a signal peptide; the sequence is MTDHKIIMLLLLGIYCIQA. Asparagine 77 and asparagine 144 each carry an N-linked (GlcNAc...) asparagine; by host glycan. Residue serine 217 is the Acyl-ester intermediate of the active site. 3 N-linked (GlcNAc...) asparagine; by host glycosylation sites follow: asparagine 257, asparagine 269, and asparagine 283. The active-site Charge relay system is glutamate 337. 2 N-linked (GlcNAc...) asparagine; by host glycosylation sites follow: asparagine 373 and asparagine 394. Catalysis depends on histidine 451, which acts as the Charge relay system. Residue asparagine 469 is glycosylated (N-linked (GlcNAc...) asparagine; by host).

This sequence belongs to the type-B carboxylesterase/lipase family.

The enzyme catalyses an acylcholine + H2O = a carboxylate + choline + H(+). May be involved in the disruption of the host membrane. This Acanthamoeba polyphaga mimivirus (APMV) protein is Probable cholinesterase.